Reading from the N-terminus, the 74-residue chain is Brevinin-2MT1 (74 aa).

An N-terminal signal peptide occupies residues 1–22; it reads MFTMKKSLLVLFFLGTISLSLC. A propeptide spans 23–39 (removed in mature form); it reads EEERNADEDDGEMTEEE. An intrachain disulfide couples cysteine 68 to cysteine 74.

It belongs to the frog skin active peptide (FSAP) family. Brevinin subfamily. Expressed by the skin glands.

It is found in the secreted. Its function is as follows. Antimicrobial peptide. Active against a variety of Gram-negative and Gram-positive bacterial strains. Active against fungi. Shows hemolytic activity against human erythrocytes. The sequence is that of Brevinin-2MT1 from Amolops mantzorum (Sichuan torrent frog).